A 226-amino-acid polypeptide reads, in one-letter code: Ribonuclease HII (226 aa).

The RNase H type-2 domain occupies 29-220 (GPVAGVDEAG…VVAAGVRLEQ (192 aa)). 3 residues coordinate a divalent metal cation: aspartate 35, glutamate 36, and aspartate 129.

Belongs to the RNase HII family. Mn(2+) is required as a cofactor. Requires Mg(2+) as cofactor.

It is found in the cytoplasm. It catalyses the reaction Endonucleolytic cleavage to 5'-phosphomonoester.. Its function is as follows. Endonuclease that specifically degrades the RNA of RNA-DNA hybrids. The chain is Ribonuclease HII from Rhodococcus erythropolis (strain PR4 / NBRC 100887).